Here is a 194-residue protein sequence, read N- to C-terminus: Putative manganese efflux pump MntP (194 aa).

6 helical membrane-spanning segments follow: residues 3–23 (PFSIVLIGFAMSTDAFAAAIG), 37–57 (LRAGLIFGCIEAITPVIGWVL), 69–89 (DHWIAFVLLGALGTHMMIAGL), 110–132 (LGLATTGFATSIDAMAVGVSLAF), 147–167 (CTFSMVTAGVMLGRALGNLIG), and 172–192 (ILGGLILVIVGSVILYEHLGA).

The protein belongs to the MntP (TC 9.B.29) family.

It localises to the cell inner membrane. Functionally, probably functions as a manganese efflux pump. In Xanthomonas oryzae pv. oryzae (strain MAFF 311018), this protein is Putative manganese efflux pump MntP.